A 244-amino-acid chain; its full sequence is 5-oxoprolinase subunit A (244 aa).

The protein belongs to the LamB/PxpA family. Forms a complex composed of PxpA, PxpB and PxpC.

The enzyme catalyses 5-oxo-L-proline + ATP + 2 H2O = L-glutamate + ADP + phosphate + H(+). Catalyzes the cleavage of 5-oxoproline to form L-glutamate coupled to the hydrolysis of ATP to ADP and inorganic phosphate. This Salmonella typhi protein is 5-oxoprolinase subunit A.